Here is a 419-residue protein sequence, read N- to C-terminus: D-amino acid dehydrogenase (419 aa).

3-17 (VLILGGGVVGVTSAY) provides a ligand contact to FAD.

This sequence belongs to the DadA oxidoreductase family. FAD serves as cofactor.

The enzyme catalyses a D-alpha-amino acid + A + H2O = a 2-oxocarboxylate + AH2 + NH4(+). It functions in the pathway amino-acid degradation; D-alanine degradation; NH(3) and pyruvate from D-alanine: step 1/1. In terms of biological role, oxidative deamination of D-amino acids. The chain is D-amino acid dehydrogenase from Methylobacterium radiotolerans (strain ATCC 27329 / DSM 1819 / JCM 2831 / NBRC 15690 / NCIMB 10815 / 0-1).